The chain runs to 299 residues: MQSPLSLCLFAPEHVAHRLRSIFQGDRHYLSTFQALDDFCAFLEDKPERIDCLLVYYEANSLPVLNRLYEQGRLLPIILLEPSPSALAKTTDEHPTIVYHNAEIHLPESQWSELPTVVDRAIAHYLHLGPICTLPNQTETIPAPIVDESSQSFLLLQQRRLADKLKERLGYLGVYYKRKPSHFYRNFSPQEKQEYLEDLSSQYREIILSYFSDEGTVNDLLDQFVNQAFFADLAISQILEIHMELMDEFSQHLKLEGRSEEVLLDYRLVLIDILAHLGEMYRRSIPREDIPFDVYYQTD.

Positions 1–135 (MQSPLSLCLF…LHLGPICTLP (135 aa)) are psR domain, binds oxidized quinones. The KaiA N-terminal domain occupies 1 to 169 (MQSPLSLCLF…RLADKLKERL (169 aa)). Residues 170 to 178 (GYLGVYYKR) form a flexible linker region. The region spanning 179 to 287 (KPSHFYRNFS…GEMYRRSIPR (109 aa)) is the KaiA C-terminal domain.

The protein belongs to the KaiA family. In terms of assembly, homodimer. The KaiABC1 complex composition changes during the circadian cycle to control KaiC1 phosphorylation. Complexes KaiC1(6), KaiA(2-4):KaiC1(6), KaiB(6):KaiC1(6) and KaiC1(6):KaiB(6):KaiA(12) are among the most important forms, many form cooperatively. KaiA and CikA bind to the same region of the KaiB(fs) form and therefore compete. Interacts with KaiC1 but not KaiC2 or KaiC3. Interacts with itself, not seen to interact with other Kai proteins.

Functionally, key component of the KaiABC oscillator complex, which constitutes the main circadian regulator in cyanobacteria. Complex composition changes during the circadian cycle to control KaiC phosphorylation. KaiA stimulates KaiC autophosphorylation, while KaiB sequesters KaiA, leading to KaiC autodephosphorylation. KaiA binding to the KaiC CII domain during the subjective day yields KaiA(2-4):KaiC(6) complexes which stimulate KaiC autophosphorylation. Phospho-Ser-431 KaiC accumulation triggers binding of KaiB during the subjective night to form the KaiB(6):KaiC(6) complex, leading to changes in the output regulators CikA and SasA. KaiB(6):KaiC(6) formation exposes a site for KaiA binding on KaiB that sequesters KaiA from KaiC's CII domain, making the KaiC(6):KaiB(6):KaiA(12) complex resulting in KaiC autodephosphorylation. Complete dephosphorylation of KaiC leads to dissociation of KaiA(2):KaiB(1), completing 1 cycle of the Kai oscillator. Its function is as follows. Component of the oscillator and circadian clock in this organism, enhances fitness in a rhythmic environment. Stimulates KaiC1 to autophosphorylate, has no effect on the kinase activity of KaiC2 or KaiC3. In terms of biological role, binds oxidized quinones via the N-terminal PsR domain, allowing it to sense redox changes and possibly mediate clock input. The polypeptide is Circadian clock oscillator protein KaiA (Synechocystis sp. (strain ATCC 27184 / PCC 6803 / Kazusa)).